The following is a 241-amino-acid chain: Chaperone protein FimC (241 aa).

A signal peptide spans 1-36 (MSNKNVNVRKSQEITFCLLAGILMFMAMMVAGRAEA).

The protein belongs to the periplasmic pilus chaperone family.

The protein localises to the periplasm. Its function is as follows. Required for the biogenesis of type 1 fimbriae. Binds and interact with FimH. The chain is Chaperone protein FimC (fimC) from Escherichia coli (strain K12).